Reading from the N-terminus, the 316-residue chain is MTELYTAANPAEALKLVSLPEDELFVGATQLRRATFDNRITLCAIINARSGNCGMDCRFCSQSKHNHTPIETFSLLPDDELRGRILALGTQPVARIGVVTSGGALSGEEFDRLLGVLRSLPEYVLKRVCASLGKLSAVQLAQLMDIGLDRYHHNLETSRRYYPSICTTQTWDQRKATVERVFGAGMTACTGGLFGLGESWRDRIDFAFALKSLGVTHVPMNFLHPHPETPLAGQPPLTAGEALRIVAVFRHILPTATLRICGGRPLVLGARQKEIFAAGANALMTGDYLTTQGRGLVDDLAMIDSLGLEVDCDQSC.

In terms of domain architecture, Radical SAM core spans 36-264 (FDNRITLCAI…TATLRICGGR (229 aa)). Cys53, Cys57, and Cys60 together coordinate [4Fe-4S] cluster. 3 residues coordinate [2Fe-2S] cluster: Cys129, Cys189, and Arg259.

Belongs to the radical SAM superfamily. Biotin synthase family. In terms of assembly, homodimer. [4Fe-4S] cluster serves as cofactor. [2Fe-2S] cluster is required as a cofactor.

The enzyme catalyses (4R,5S)-dethiobiotin + (sulfur carrier)-SH + 2 reduced [2Fe-2S]-[ferredoxin] + 2 S-adenosyl-L-methionine = (sulfur carrier)-H + biotin + 2 5'-deoxyadenosine + 2 L-methionine + 2 oxidized [2Fe-2S]-[ferredoxin]. It functions in the pathway cofactor biosynthesis; biotin biosynthesis; biotin from 7,8-diaminononanoate: step 2/2. Catalyzes the conversion of dethiobiotin (DTB) to biotin by the insertion of a sulfur atom into dethiobiotin via a radical-based mechanism. This Desulfovibrio desulfuricans (strain ATCC 27774 / DSM 6949 / MB) protein is Biotin synthase.